The primary structure comprises 1217 residues: WD repeat-containing protein on Y chromosome (1217 aa).

WD repeat units follow at residues 155–199 (EDMT…LRSA), 323–362 (RIPL…EPSA), 366–405 (GHNG…LLQT), 456–495 (THAA…RKII), 508–547 (TIDI…VVRN), 595–635 (FHTD…RRYN), 740–779 (KVGD…IPEA), and 823–862 (GHLK…LGTL). Disordered regions lie at residues 910–929 (QVKR…VEDT) and 1033–1217 (AGGQ…KDKP). The span at 919–929 (EREDEGEVEDT) shows a compositional bias: acidic residues. Polar residues-rich tracts occupy residues 1041-1054 (RASS…TNSI), 1085-1107 (FGPN…SQLK), and 1137-1179 (PVST…TSAN). A compositionally biased stretch (low complexity) spans 1181–1190 (KPDIMPVKIK). Residues 1198–1210 (RNTAPVQITTSIA) show a composition bias toward polar residues.

The polypeptide is WD repeat-containing protein on Y chromosome (Drosophila mojavensis (Fruit fly)).